We begin with the raw amino-acid sequence, 88 residues long: Secretion system apparatus protein SsaS (88 aa).

2 helical membrane-spanning segments follow: residues 15–35 (WIVLFTSMPVVLVASVVGVIV) and 55–75 (LLAIAITLMVSYPWLSGILLN).

It belongs to the FliQ/MopD/SpaQ family.

It localises to the cell membrane. In terms of biological role, part of a type III secretion system. This is Secretion system apparatus protein SsaS (ssaS) from Salmonella typhimurium (strain LT2 / SGSC1412 / ATCC 700720).